A 521-amino-acid polypeptide reads, in one-letter code: Cytochrome P450 1A1 (521 aa).

F229 is a binding site for substrate. Residue C463 coordinates heme.

It belongs to the cytochrome P450 family. Heme serves as cofactor.

It is found in the endoplasmic reticulum membrane. The protein localises to the microsome membrane. It catalyses the reaction an organic molecule + reduced [NADPH--hemoprotein reductase] + O2 = an alcohol + oxidized [NADPH--hemoprotein reductase] + H2O + H(+). Its function is as follows. Cytochromes P450 are a group of heme-thiolate monooxygenases. They oxidize a variety of structurally unrelated compounds, including steroids, fatty acids, and xenobiotics. This is Cytochrome P450 1A1 (cyp1a1) from Oryzias latipes (Japanese rice fish).